The chain runs to 212 residues: Large ribosomal subunit protein uL3 (212 aa).

Residues 140 to 155 show a composition bias toward polar residues; it reads SVSHRAIGSTGQNQSP. Residues 140 to 166 form a disordered region; that stretch reads SVSHRAIGSTGQNQSPGKVFKGKKMPG. Q153 carries the post-translational modification N5-methylglutamine.

Belongs to the universal ribosomal protein uL3 family. Part of the 50S ribosomal subunit. Forms a cluster with proteins L14 and L19. In terms of processing, methylated by PrmB.

Functionally, one of the primary rRNA binding proteins, it binds directly near the 3'-end of the 23S rRNA, where it nucleates assembly of the 50S subunit. The protein is Large ribosomal subunit protein uL3 of Psychrobacter cryohalolentis (strain ATCC BAA-1226 / DSM 17306 / VKM B-2378 / K5).